Consider the following 523-residue polypeptide: 2-isopropylmalate synthase (523 aa).

The Pyruvate carboxyltransferase domain maps to 5 to 267; that stretch reads VIIFDTTLRD…HTAINHQEIW (263 aa). Residues Asp14, His202, His204, and Asn238 each coordinate Mn(2+). The interval 392-523 is regulatory domain; it reads RLDYFSVQSG…QHNENNKETV (132 aa).

It belongs to the alpha-IPM synthase/homocitrate synthase family. LeuA type 1 subfamily. In terms of assembly, homodimer. Requires Mn(2+) as cofactor.

The protein resides in the cytoplasm. It catalyses the reaction 3-methyl-2-oxobutanoate + acetyl-CoA + H2O = (2S)-2-isopropylmalate + CoA + H(+). It participates in amino-acid biosynthesis; L-leucine biosynthesis; L-leucine from 3-methyl-2-oxobutanoate: step 1/4. Functionally, catalyzes the condensation of the acetyl group of acetyl-CoA with 3-methyl-2-oxobutanoate (2-ketoisovalerate) to form 3-carboxy-3-hydroxy-4-methylpentanoate (2-isopropylmalate). The chain is 2-isopropylmalate synthase from Escherichia coli O127:H6 (strain E2348/69 / EPEC).